The chain runs to 379 residues: Chaperone protein DnaJ (379 aa).

The J domain occupies 5–69; that stretch reads DYYEVLGISK…NKRASYDQFG (65 aa). The CR-type zinc finger occupies 136–218; the sequence is GTTKEISIRK…CHGKGTENKT (83 aa). Zn(2+) is bound by residues Cys-149, Cys-152, Cys-166, Cys-169, Cys-192, Cys-195, Cys-206, and Cys-209. 4 CXXCXGXG motif repeats span residues 149–156, 166–173, 192–199, and 206–213; these read CETCHGDG, CSYCNGAG, CPKCNGSG, and CPTCHGKG.

This sequence belongs to the DnaJ family. As to quaternary structure, homodimer. The cofactor is Zn(2+).

Its subcellular location is the cytoplasm. Functionally, participates actively in the response to hyperosmotic and heat shock by preventing the aggregation of stress-denatured proteins and by disaggregating proteins, also in an autonomous, DnaK-independent fashion. Unfolded proteins bind initially to DnaJ; upon interaction with the DnaJ-bound protein, DnaK hydrolyzes its bound ATP, resulting in the formation of a stable complex. GrpE releases ADP from DnaK; ATP binding to DnaK triggers the release of the substrate protein, thus completing the reaction cycle. Several rounds of ATP-dependent interactions between DnaJ, DnaK and GrpE are required for fully efficient folding. Also involved, together with DnaK and GrpE, in the DNA replication of plasmids through activation of initiation proteins. This is Chaperone protein DnaJ from Staphylococcus aureus (strain USA300 / TCH1516).